Reading from the N-terminus, the 105-residue chain is DNA-directed RNA polymerase subunit omega (105 aa).

The protein belongs to the RNA polymerase subunit omega family. As to quaternary structure, the RNAP catalytic core consists of 2 alpha, 1 beta, 1 beta' and 1 omega subunit. When a sigma factor is associated with the core the holoenzyme is formed, which can initiate transcription.

The enzyme catalyses RNA(n) + a ribonucleoside 5'-triphosphate = RNA(n+1) + diphosphate. Its function is as follows. Promotes RNA polymerase assembly. Latches the N- and C-terminal regions of the beta' subunit thereby facilitating its interaction with the beta and alpha subunits. The polypeptide is DNA-directed RNA polymerase subunit omega (Streptococcus pyogenes serotype M12 (strain MGAS2096)).